The following is a 571-amino-acid chain: Proline--tRNA ligase (571 aa).

The protein belongs to the class-II aminoacyl-tRNA synthetase family. ProS type 1 subfamily. In terms of assembly, homodimer.

It localises to the cytoplasm. It carries out the reaction tRNA(Pro) + L-proline + ATP = L-prolyl-tRNA(Pro) + AMP + diphosphate. Its function is as follows. Catalyzes the attachment of proline to tRNA(Pro) in a two-step reaction: proline is first activated by ATP to form Pro-AMP and then transferred to the acceptor end of tRNA(Pro). As ProRS can inadvertently accommodate and process non-cognate amino acids such as alanine and cysteine, to avoid such errors it has two additional distinct editing activities against alanine. One activity is designated as 'pretransfer' editing and involves the tRNA(Pro)-independent hydrolysis of activated Ala-AMP. The other activity is designated 'posttransfer' editing and involves deacylation of mischarged Ala-tRNA(Pro). The misacylated Cys-tRNA(Pro) is not edited by ProRS. In Vibrio atlanticus (strain LGP32) (Vibrio splendidus (strain Mel32)), this protein is Proline--tRNA ligase.